The following is a 373-amino-acid chain: Chorismate synthase (373 aa).

Arg46 lines the NADP(+) pocket. FMN-binding positions include 123–125 (RSS), 251–252 (NA), Gly295, 310–314 (KPTPS), and Arg337.

It belongs to the chorismate synthase family. The cofactor is FMNH2.

The catalysed reaction is 5-O-(1-carboxyvinyl)-3-phosphoshikimate = chorismate + phosphate. It participates in metabolic intermediate biosynthesis; chorismate biosynthesis; chorismate from D-erythrose 4-phosphate and phosphoenolpyruvate: step 7/7. Functionally, catalyzes the anti-1,4-elimination of the C-3 phosphate and the C-6 proR hydrogen from 5-enolpyruvylshikimate-3-phosphate (EPSP) to yield chorismate, which is the branch point compound that serves as the starting substrate for the three terminal pathways of aromatic amino acid biosynthesis. This reaction introduces a second double bond into the aromatic ring system. This Methanococcus maripaludis (strain DSM 14266 / JCM 13030 / NBRC 101832 / S2 / LL) protein is Chorismate synthase.